Here is a 440-residue protein sequence, read N- to C-terminus: Ribulose bisphosphate carboxylase large chain (440 aa).

Residue Lys4 is modified to N6,N6,N6-trimethyllysine. Residues Asn113 and Thr163 each coordinate substrate. The active-site Proton acceptor is Lys165. Residue Lys167 coordinates substrate. Mg(2+)-binding residues include Lys191, Asp193, and Glu194. Lys191 bears the N6-carboxylysine mark. The active-site Proton acceptor is the His284. Positions 285, 317, and 369 each coordinate substrate.

The protein belongs to the RuBisCO large chain family. Type I subfamily. As to quaternary structure, heterohexadecamer of 8 large chains and 8 small chains; disulfide-linked. The disulfide link is formed within the large subunit homodimers. Mg(2+) serves as cofactor. Post-translationally, the disulfide bond which can form in the large chain dimeric partners within the hexadecamer appears to be associated with oxidative stress and protein turnover.

Its subcellular location is the plastid. It localises to the chloroplast. It catalyses the reaction 2 (2R)-3-phosphoglycerate + 2 H(+) = D-ribulose 1,5-bisphosphate + CO2 + H2O. It carries out the reaction D-ribulose 1,5-bisphosphate + O2 = 2-phosphoglycolate + (2R)-3-phosphoglycerate + 2 H(+). Its function is as follows. RuBisCO catalyzes two reactions: the carboxylation of D-ribulose 1,5-bisphosphate, the primary event in carbon dioxide fixation, as well as the oxidative fragmentation of the pentose substrate in the photorespiration process. Both reactions occur simultaneously and in competition at the same active site. The protein is Ribulose bisphosphate carboxylase large chain of Ptychomitrium gardneri (Gardner's ptychomitrium moss).